We begin with the raw amino-acid sequence, 90 residues long: Phaiodotoxin (90 aa).

An N-terminal signal peptide occupies residues 1–18 (MKTIPLLFLLFIYFECDG). In terms of domain architecture, LCN-type CS-alpha/beta spans 19–90 (KFIRHKDESF…CFGALESKCA (72 aa)). 4 cysteine pairs are disulfide-bonded: Cys31-Cys56, Cys41-Cys68, Cys45-Cys70, and Cys81-Cys89.

Expressed by the venom gland.

The protein resides in the secreted. Sodium channel (Nav) specific neurotoxin. Causes impairment of movement and mild paralysis in crickets at a dose of 0.5 ug per animal. A dose of 0.8 ug per cricket causes clear flaccid paralysis. A dose of 1.0 ug per cricket causes death within 2 hours. Is not toxic to mice at a dose of 100 ug per 20 g mouse weight. This chain is Phaiodotoxin, found in Anuroctonus phaiodactylus (Mafia scorpion).